A 301-amino-acid chain; its full sequence is HTH-type transcriptional regulator AbaB (301 aa).

The HTH lysR-type domain maps to 1-58 (MDLALLRTFVTVHRAGSFTRAAALLGLSQPAVTSQIRTLERQLGRPLFLRQARGVTPT). The H-T-H motif DNA-binding region spans 18–37 (FTRAAALLGLSQPAVTSQIR).

This sequence belongs to the LysR transcriptional regulatory family.

Putative regulator that may be involved in stimulating antibiotic production in S.antibioticus. This is HTH-type transcriptional regulator AbaB from Streptomyces antibioticus.